Reading from the N-terminus, the 2535-residue chain is Piezo-type mechanosensitive ion channel component 1 (2535 aa).

Helical transmembrane passes span Leu-13–Leu-25, Ala-29–Leu-44, and Leu-59–Leu-81. Residue Asn-100 is glycosylated (N-linked (GlcNAc...) asparagine). The next 5 membrane-spanning stretches (helical) occupy residues Val-122 to Leu-138, Leu-193 to Ala-212, Ser-215 to Cys-234, Leu-246 to Thr-266, and Trp-308 to Leu-328. A compositionally biased stretch (acidic residues) spans Asp-346–Glu-357. Residues Asp-346 to Asp-377 form a disordered region. Positions Pro-358–Pro-376 are enriched in low complexity. An N-linked (GlcNAc...) asparagine glycan is attached at Asn-380. 8 helical membrane passes run Leu-416–Tyr-436, Trp-439–Val-454, Leu-460–Trp-482, Cys-510–Leu-527, Ile-572–Gly-592, Leu-594–Val-614, Val-625–Phe-646, and Leu-677–Leu-693. Ser-749 is subject to Phosphoserine. The next 12 helical transmembrane spans lie at Leu-803–Lys-814, Val-818–Leu-831, Val-846–Leu-860, Gly-913–Arg-940, Gly-981–Arg-996, Phe-999–Arg-1014, Cys-1028–Leu-1043, Thr-1083–Ala-1104, Tyr-1140–Thr-1166, Gly-1172–Leu-1190, Leu-1204–Ser-1222, and Ile-1272–Phe-1288. The stretch at His-1325 to Ser-1356 forms a coiled coil. Disordered stretches follow at residues Ala-1345–Trp-1383 and Ser-1556–Ser-1597. Residues Gln-1352 to Pro-1365 show a composition bias toward polar residues. Ser-1372 and Ser-1377 each carry phosphoserine. Positions Ser-1579–Ser-1597 are enriched in polar residues. A phosphoserine mark is found at Ser-1614, Ser-1618, and Ser-1633. A run of 4 helical transmembrane segments spans residues Pro-1644–Met-1687, Ala-1692–Leu-1707, Phe-1716–Phe-1734, and Asp-1767–Leu-1788. Composition is skewed to basic and acidic residues over residues Pro-1801–Asp-1811 and Pro-1842–Pro-1867. Residues Pro-1801–Leu-1911 form a disordered region. The span at Gln-1868–Lys-1881 shows a compositional bias: basic residues. The next 5 membrane-spanning stretches (helical) occupy residues Tyr-1965–Trp-1984, Pro-2005–Ile-2021, Ala-2036–Val-2056, Ala-2065–Leu-2080, and Gly-2181–Ile-2201. Cys-2425 and Cys-2429 are oxidised to a cystine. Residues Leu-2446–Gly-2466 form a helical membrane-spanning segment.

Belongs to the PIEZO (TC 1.A.75) family. In terms of assembly, homotrimer; the homotrimer forms a propeller-shaped Piezo channel with a cation-ion conducting pore. Heterotrimeric interaction may occur between PIEZO1 and PIEZO2. Interacts with PKD2. Interacts with STOM13. Interacts with TMC1, TMC2, PCDH15 and CIB2; the interaction may be part of the MET complex. Interacts with MDFIC (via C-terminus); the interaction prolongs Piezo channel inactivation. Interacts with MDFI (via C-terminus); the interaction prolongs Piezo channel inactivation. As to expression, moderate expression in lung and kidney. Very weak expression in heart, spleen and liver.

The protein resides in the endoplasmic reticulum membrane. Its subcellular location is the endoplasmic reticulum-Golgi intermediate compartment membrane. It localises to the cell membrane. The protein localises to the cell projection. It is found in the lamellipodium membrane. It catalyses the reaction K(+)(in) = K(+)(out). The catalysed reaction is Na(+)(in) = Na(+)(out). It carries out the reaction Ca(2+)(in) = Ca(2+)(out). The enzyme catalyses Mg(2+)(in) = Mg(2+)(out). With respect to regulation, regulated by auxillary subunits MDFIC and MDFI. Down-regulated by phosphatidylserines exposed on the cell surface. Divalent ions decrease the single-channel permeability of K(+). Its function is as follows. Pore-forming subunit of the mechanosensitive non-specific cation Piezo channel required for rapidly adapting mechanically activated (MA) currents and has a key role in sensing touch and tactile pain. Piezo channels are homotrimeric three-blade propeller-shaped structures that utilize a cap-motion and plug-and-latch mechanism to gate their ion-conducting pathways. Generates currents characterized by a linear current-voltage relationship that are sensitive to ruthenium red and gadolinium. Conductance to monovalent alkali ions is highest for K(+), intermediate for Na(+) and lowest for Li(+). Divalent ions except for Mn(2+) permeate the channel but more slowly than the monovalent ions and they also reduce K(+) currents. Plays a key role in epithelial cell adhesion by maintaining integrin activation through R-Ras recruitment to the ER, most probably in its activated state, and subsequent stimulation of calpain signaling. In inner ear hair cells, PIEZO1/2 subunits may constitute part of the mechanotransducer (MET) non-selective cation channel complex where they may act as pore-forming ion-conducting component in the complex. In the kidney, may contribute to the detection of intraluminal pressure changes and to urine flow sensing. Acts as a shear-stress sensor that promotes endothelial cell organization and alignment in the direction of blood flow through calpain activation. Plays a key role in blood vessel formation and vascular structure in both development and adult physiology. Acts as a sensor of phosphatidylserine (PS) flipping at the plasma membrane and governs morphogenesis of muscle cells. In myoblasts, flippase-mediated PS enrichment at the inner leaflet of plasma membrane triggers channel activation and Ca(2+) influx followed by Rho GTPases signal transduction, leading to assembly of cortical actomyosin fibers and myotube formation. The sequence is that of Piezo-type mechanosensitive ion channel component 1 (Piezo1) from Rattus norvegicus (Rat).